The chain runs to 323 residues: Aspartate carbamoyltransferase catalytic subunit (323 aa).

Positions 71 and 72 each coordinate carbamoyl phosphate. Lys-99 is a binding site for L-aspartate. The carbamoyl phosphate site is built by Arg-121, His-151, and Gln-154. Arg-184 and Arg-239 together coordinate L-aspartate. Carbamoyl phosphate contacts are provided by Gly-280 and Pro-281.

It belongs to the aspartate/ornithine carbamoyltransferase superfamily. ATCase family. As to quaternary structure, heterododecamer (2C3:3R2) of six catalytic PyrB chains organized as two trimers (C3), and six regulatory PyrI chains organized as three dimers (R2).

The catalysed reaction is carbamoyl phosphate + L-aspartate = N-carbamoyl-L-aspartate + phosphate + H(+). The protein operates within pyrimidine metabolism; UMP biosynthesis via de novo pathway; (S)-dihydroorotate from bicarbonate: step 2/3. Catalyzes the condensation of carbamoyl phosphate and aspartate to form carbamoyl aspartate and inorganic phosphate, the committed step in the de novo pyrimidine nucleotide biosynthesis pathway. This Ralstonia pickettii (strain 12J) protein is Aspartate carbamoyltransferase catalytic subunit.